Consider the following 76-residue polypeptide: uncharacterized protein (76 aa).

2 EF-hand domains span residues 9 to 44 and 43 to 76; these read EMDE…LGEN and ENLT…IHIS.

It is found in the cytoplasm. Its subcellular location is the nucleus. This is an uncharacterized protein from Schizosaccharomyces pombe (strain 972 / ATCC 24843) (Fission yeast).